Consider the following 481-residue polypeptide: Dual specificity protein kinase CLK4 (481 aa).

Disordered stretches follow at residues 1–47 and 102–143; these read MRHS…KPHH and SKSS…EDDE. The span at 8–19 shows a compositional bias: basic and acidic residues; it reads HCPDWDSRESWG. Basic residues-rich tracts occupy residues 106–119 and 126–136; these read VRSR…KRNR and SHSKSHRRKRS. Residues Ser136 and Ser138 each carry the phosphoserine modification. In terms of domain architecture, Protein kinase spans 159 to 475; it reads YEIVDTLGEG…LDEALQHPFF (317 aa). ATP contacts are provided by residues 165–173 and Lys189; that span reads LGEGAFGKV. Catalysis depends on Asp286, which acts as the Proton acceptor.

Belongs to the protein kinase superfamily. CMGC Ser/Thr protein kinase family. Lammer subfamily. In terms of assembly, interacts with UBL5. Autophosphorylates on all three types of residues. As to expression, expressed in the hippocampus, the cerebellum and the olfactory bulb.

It localises to the nucleus. The catalysed reaction is L-seryl-[protein] + ATP = O-phospho-L-seryl-[protein] + ADP + H(+). It carries out the reaction L-threonyl-[protein] + ATP = O-phospho-L-threonyl-[protein] + ADP + H(+). It catalyses the reaction L-tyrosyl-[protein] + ATP = O-phospho-L-tyrosyl-[protein] + ADP + H(+). TG003 inhibits its kinase activity and affects the regulation of alternative splicing mediated by phosphorylation of SR proteins. In terms of biological role, dual specificity kinase acting on both serine/threonine and tyrosine-containing substrates. Phosphorylates serine- and arginine-rich (SR) proteins of the spliceosomal complex and may be a constituent of a network of regulatory mechanisms that enable SR proteins to control RNA splicing. Phosphorylates SRSF1 and SRSF3. Required for the regulation of alternative splicing of MAPT/TAU. Regulates the alternative splicing of tissue factor (F3) pre-mRNA in endothelial cells. In Mus musculus (Mouse), this protein is Dual specificity protein kinase CLK4 (Clk4).